The sequence spans 115 residues: MSNIIKQLEQEQMKQDVPSFRPGDTVEVKVWVVEGSKKRLQAFEGVVIAIRNRGLHSAFTVRKISNGEGVERVFQTHSPVVDSIAVKRRGAVRKAKLYYLRERTGKSARIKERLN.

It belongs to the bacterial ribosomal protein bL19 family.

This protein is located at the 30S-50S ribosomal subunit interface and may play a role in the structure and function of the aminoacyl-tRNA binding site. In Klebsiella pneumoniae (strain 342), this protein is Large ribosomal subunit protein bL19.